We begin with the raw amino-acid sequence, 208 residues long: Large ribosomal subunit protein uL3 (208 aa).

The disordered stretch occupies residues 122–148; sequence KRHGQSRGPMAHGSRYHRRPGSMGPVA.

It belongs to the universal ribosomal protein uL3 family. In terms of assembly, part of the 50S ribosomal subunit. Forms a cluster with proteins L14 and L19.

One of the primary rRNA binding proteins, it binds directly near the 3'-end of the 23S rRNA, where it nucleates assembly of the 50S subunit. The polypeptide is Large ribosomal subunit protein uL3 (Streptococcus pyogenes serotype M1).